We begin with the raw amino-acid sequence, 462 residues long: Elongation factor 1-alpha 1 (462 aa).

Residue glycine 2 is modified to N,N,N-trimethylglycine. A tr-type G domain is found at lysine 5–threonine 242. The interval glycine 14–serine 21 is G1. Position 14 to 21 (glycine 14 to serine 21) interacts with GTP. An N6,N6,N6-trimethyllysine; alternate modification is found at lysine 36. Lysine 36 carries the N6,N6-dimethyllysine; alternate modification. The residue at position 36 (lysine 36) is an N6-methyllysine; alternate. N6,N6-dimethyllysine is present on lysine 55. The G2 stretch occupies residues glycine 70–aspartate 74. N6,N6,N6-trimethyllysine; by EEF1AKMT1 is present on lysine 79. The interval aspartate 91–glycine 94 is G3. Asparagine 153–aspartate 156 is a binding site for GTP. A G4 region spans residues asparagine 153–aspartate 156. Lysine 165 bears the N6,N6,N6-trimethyllysine; alternate; by EEF1AKMT3 mark. The residue at position 165 (lysine 165) is an N6,N6-dimethyllysine; alternate; by EEF1AKMT3. Residue lysine 165 is modified to N6-acetyllysine; alternate. Lysine 165 carries the N6-methyllysine; alternate; by EEF1AKMT3 modification. Position 172 is an N6-acetyllysine (lysine 172). Serine 194–tryptophan 196 contacts GTP. Residues serine 194–tryptophan 196 are G5. Lysine 273 is subject to N6-acetyllysine. Serine 300 is modified (phosphoserine; by TGFBR1). Residue glutamate 301 is modified to 5-glutamyl glycerylphosphorylethanolamine. Lysine 318 carries the post-translational modification N6,N6,N6-trimethyllysine; by EEF1AKMT2. Glutamate 374 bears the 5-glutamyl glycerylphosphorylethanolamine mark. Lysine 385 is covalently cross-linked (Glycyl lysine isopeptide (Lys-Gly) (interchain with G-Cter in ubiquitin)). At lysine 392 the chain carries N6-acetyllysine; alternate. N6-succinyllysine; alternate is present on lysine 392. Threonine 432 is modified (phosphothreonine; by PASK). Residue lysine 439 is modified to N6-acetyllysine.

This sequence belongs to the TRAFAC class translation factor GTPase superfamily. Classic translation factor GTPase family. EF-Tu/EF-1A subfamily. Found in a nuclear export complex with XPO5, EEF1A1, Ran and aminoacylated tRNA. Interacts with PARP1 and TXK. Interacts with KARS1. May interact with ERGIC2. Interacts with IFIT1 (via TPR repeats 4-7). Interacts with DLC1, facilitating distribution to the membrane periphery and ruffles upon growth factor stimulation. Interacts with ZPR1; the interaction occurs in a epidermal growth factor (EGF)-dependent manner. Interacts with PPP1R16B. Interacts with SPHK1 and SPHK2; both interactions increase SPHK1 and SPHK2 kinase activity. Interacts with guanyl-nucleotide exchange factor EEF1B2. Interacts (via middle-region) with HTATIP2 (via N-terminus); the interaction is direct and competes with EEF1A1 binding to guanyl-nucleotide exchange factor EEF1B2, thereby inhibiting GDP for GTP exchange and reactivation of EEF1A1. Interacts with tRNA. In terms of processing, ISGylated. Post-translationally, phosphorylated by TXK. Phosphorylation by PASK increases translation efficiency. Phosphorylated by ROCK2. Phosphorylation by TGFBR1 inhibits translation elongation. Trimethylated at Lys-79 by EEF1AKMT1. Methylated at Lys-165 by EEF1AKMT3, methylation by EEF1AKMT3 is dynamic as well as inducible by stress conditions, such as ER-stress, and plays a regulatory role on mRNA translation. Trimethylated at Lys-318 by EEF1AKMT2. Mono-, di-, and trimethylated at Lys-36 by EEF1AKMT4; trimethylated form is predominant. Methylation by EEF1AKMT4 contributes to the fine-tuning of translation rates for a subset of tRNAs. Trimethylated at Gly-2 by METTL13. Mono- and dimethylated at Lys-55 by METTL13; dimethylated form is predominant. In terms of processing, ubiquitinated at Lys-385 by RNF14 in response to ribosome collisions (ribosome stalling), leading to its degradation by the proteasome and rescue of stalled ribosomes.

The protein localises to the cytoplasm. It localises to the nucleus. Its subcellular location is the nucleolus. The protein resides in the cell membrane. It catalyses the reaction GTP + H2O = GDP + phosphate + H(+). In terms of biological role, translation elongation factor that catalyzes the GTP-dependent binding of aminoacyl-tRNA (aa-tRNA) to the A-site of ribosomes during the elongation phase of protein synthesis. Base pairing between the mRNA codon and the aa-tRNA anticodon promotes GTP hydrolysis, releasing the aa-tRNA from EEF1A1 and allowing its accommodation into the ribosome. The growing protein chain is subsequently transferred from the P-site peptidyl tRNA to the A-site aa-tRNA, extending it by one amino acid through ribosome-catalyzed peptide bond formation. Also plays a role in the positive regulation of IFNG transcription in T-helper 1 cells as part of an IFNG promoter-binding complex with TXK and PARP1. Also plays a role in cytoskeleton organization by promoting actin bundling. This is Elongation factor 1-alpha 1 (EEF1A1) from Equus caballus (Horse).